Consider the following 143-residue polypeptide: Large-conductance mechanosensitive channel (143 aa).

A run of 2 helical transmembrane segments spans residues 19–39 and 81–101; these read VGVI…GDLI and GSFL…FGVI.

The protein belongs to the MscL family. As to quaternary structure, homopentamer.

It localises to the cell inner membrane. Functionally, channel that opens in response to stretch forces in the membrane lipid bilayer. May participate in the regulation of osmotic pressure changes within the cell. This is Large-conductance mechanosensitive channel from Rhodopseudomonas palustris (strain BisB5).